A 418-amino-acid chain; its full sequence is E3 ubiquitin-protein ligase pellino homolog 1 (418 aa).

Residues 13–200 enclose the FHA; atypical domain; the sequence is APVKYGELIV…MHPRNGFTED (188 aa). Residue Ser121 is modified to Phosphoserine; by ATM. Position 127 is a phosphothreonine; by ATM (Thr127). The ring-like domain; necessary for ubiqitination of RIPK3 stretch occupies residues 311 to 399; sequence CGHVHGYHNW…TFHAACPFCA (89 aa).

It belongs to the pellino family. In terms of assembly, interacts with MAP3K7. Upon IL1B treatment, forms a complex with TRAF6, IRAK1, IRAK4 and MYD88; this complex recruits MAP3K7/TAK1, TAB1 and TAB2 to mediate NF-kappa-B activation. Direct binding of SMAD6 to PELI1 prevents the complex formation and hence negatively regulates IL1R-TLR signaling and eventually NF-kappa-B-mediated gene expression. Interacts (via atypical FHA domain) with RIPK3; preferentially binds to the 'Thr-182' phosphorylated form of RIPK3. Interacts with RIPK1 and IRAK1. Post-translationally, phosphorylation by IRAK1 and IRAK4 enhances its E3 ligase activity. Phosphorylated by ATM in response to DNA damage, promoting localization to DNA double-strand breaks (DSBs) and ability to mediate 'Lys-63'-linked ubiquitination of NBN. Sumoylated. Expressed at high levels in normal skin but decreased in keratinocytes from toxic epidermal necrolysis (TEN) patients (at protein level).

Its subcellular location is the chromosome. It catalyses the reaction S-ubiquitinyl-[E2 ubiquitin-conjugating enzyme]-L-cysteine + [acceptor protein]-L-lysine = [E2 ubiquitin-conjugating enzyme]-L-cysteine + N(6)-ubiquitinyl-[acceptor protein]-L-lysine.. The protein operates within protein modification; protein ubiquitination. In terms of biological role, E3 ubiquitin ligase catalyzing the covalent attachment of ubiquitin moieties onto substrate proteins. Involved in the TLR and IL-1 signaling pathways via interaction with the complex containing IRAK kinases and TRAF6. Acts as a positive regulator of inflammatory response in microglia through activation of NF-kappa-B and MAP kinase. Mediates 'Lys-63'-linked polyubiquitination of IRAK1 allowing subsequent NF-kappa-B activation. Conjugates 'Lys-63'-linked ubiquitin chains to the adapter protein ASC/PYCARD, which in turn is crucial for NLRP3 inflammasome activation. Mediates 'Lys-48'-linked polyubiquitination of RIPK3 leading to its subsequent proteasome-dependent degradation; preferentially recognizes and mediates the degradation of the 'Thr-182' phosphorylated form of RIPK3. Negatively regulates necroptosis by reducing RIPK3 expression. Mediates 'Lys-63'-linked ubiquitination of RIPK1. Following phosphorylation by ATM, catalyzes 'Lys-63'-linked ubiquitination of NBN, promoting DNA repair via homologous recombination. Negatively regulates activation of the metabolic mTORC1 signaling pathway by mediating 'Lys-63'-linked ubiquitination of mTORC1-inhibitory protein TSC1 and thereby promoting TSC1/TSC2 complex stability. This chain is E3 ubiquitin-protein ligase pellino homolog 1, found in Homo sapiens (Human).